The primary structure comprises 237 residues: Class B acid phosphatase (237 aa).

Positions 1-23 (MKKITLALSAVCLLFTLNHSANA) are cleaved as a signal peptide. The Nucleophile role is filled by aspartate 69. Residues aspartate 69 and aspartate 71 each contribute to the Mg(2+) site. The Proton donor role is filled by aspartate 71. Residues 137 to 138 (TG) and lysine 177 each bind substrate. Aspartate 192 is a binding site for Mg(2+).

Belongs to the class B bacterial acid phosphatase family. Homotetramer. Mg(2+) serves as cofactor.

Its subcellular location is the periplasm. It catalyses the reaction a phosphate monoester + H2O = an alcohol + phosphate. In terms of biological role, dephosphorylates several organic phosphate monoesters including monophosphate nucleotides (NMPs), coenzyme A (CoA), nicotinamide adenine dinucleotide phosphate (NADP), flavin mononucleotide (FMN) and phosphorylated 5-6 carbon sugars in vitro. Also has a phosphotransferase activity catalyzing the transfer of low-energy phosphate groups from organic phosphate monoesters to free hydroxyl groups of various organic compounds. The chain is Class B acid phosphatase (aphA) from Salmonella typhi.